The primary structure comprises 227 residues: Cytochrome c oxidase subunit 2 (227 aa).

Residues 1–14 are Mitochondrial intermembrane-facing; sequence MAYPLQLGLQDATS. The helical transmembrane segment at 15 to 45 threads the bilayer; that stretch reads PIMEELMNFHDHTLMIVFLISSLVLYIISLM. The Mitochondrial matrix portion of the chain corresponds to 46–59; sequence LTTKLTHTSTMDAQ. A helical transmembrane segment spans residues 60 to 87; that stretch reads EVETIWTILPAVILIMIALPSLRILYMM. Topologically, residues 88-227 are mitochondrial intermembrane; it reads DEINNPVLTV…HFENWSASMI (140 aa). Residues H161, C196, E198, C200, H204, and M207 each coordinate Cu cation. Position 198 (E198) interacts with Mg(2+).

The protein belongs to the cytochrome c oxidase subunit 2 family. Component of the cytochrome c oxidase (complex IV, CIV), a multisubunit enzyme composed of 14 subunits. The complex is composed of a catalytic core of 3 subunits MT-CO1, MT-CO2 and MT-CO3, encoded in the mitochondrial DNA, and 11 supernumerary subunits COX4I, COX5A, COX5B, COX6A, COX6B, COX6C, COX7A, COX7B, COX7C, COX8 and NDUFA4, which are encoded in the nuclear genome. The complex exists as a monomer or a dimer and forms supercomplexes (SCs) in the inner mitochondrial membrane with NADH-ubiquinone oxidoreductase (complex I, CI) and ubiquinol-cytochrome c oxidoreductase (cytochrome b-c1 complex, complex III, CIII), resulting in different assemblies (supercomplex SCI(1)III(2)IV(1) and megacomplex MCI(2)III(2)IV(2)). Found in a complex with TMEM177, COA6, COX18, COX20, SCO1 and SCO2. Interacts with TMEM177 in a COX20-dependent manner. Interacts with COX20. Interacts with COX16. Cu cation serves as cofactor.

It localises to the mitochondrion inner membrane. The catalysed reaction is 4 Fe(II)-[cytochrome c] + O2 + 8 H(+)(in) = 4 Fe(III)-[cytochrome c] + 2 H2O + 4 H(+)(out). Component of the cytochrome c oxidase, the last enzyme in the mitochondrial electron transport chain which drives oxidative phosphorylation. The respiratory chain contains 3 multisubunit complexes succinate dehydrogenase (complex II, CII), ubiquinol-cytochrome c oxidoreductase (cytochrome b-c1 complex, complex III, CIII) and cytochrome c oxidase (complex IV, CIV), that cooperate to transfer electrons derived from NADH and succinate to molecular oxygen, creating an electrochemical gradient over the inner membrane that drives transmembrane transport and the ATP synthase. Cytochrome c oxidase is the component of the respiratory chain that catalyzes the reduction of oxygen to water. Electrons originating from reduced cytochrome c in the intermembrane space (IMS) are transferred via the dinuclear copper A center (CU(A)) of subunit 2 and heme A of subunit 1 to the active site in subunit 1, a binuclear center (BNC) formed by heme A3 and copper B (CU(B)). The BNC reduces molecular oxygen to 2 water molecules using 4 electrons from cytochrome c in the IMS and 4 protons from the mitochondrial matrix. The chain is Cytochrome c oxidase subunit 2 (MT-CO2) from Zelotomys hildegardeae (Hildegarde's broad-headed mouse).